A 138-amino-acid polypeptide reads, in one-letter code: Probable scaffold protein gp13 (138 aa).

Its function is as follows. May act as an organizer for the correct association of several proteins in the surrounding of the head-tail connector protein gp8. This is Probable scaffold protein gp13 from Escherichia coli (Bacteriophage T7).